The sequence spans 409 residues: Dihydrolipoyllysine-residue succinyltransferase component of 2-oxoglutarate dehydrogenase complex (409 aa).

A Lipoyl-binding domain is found at 2 to 77; that stretch reads AIEIKAPTFP…LSNELLGKLN (76 aa). Residue K43 is modified to N6-lipoyllysine. The Peripheral subunit-binding (PSBD) domain maps to 112-149; the sequence is ILSPAARKLAEEAGIDPNSIAGTGKGGRVTKEDVVAAV. Residues H380 and D384 contribute to the active site.

The protein belongs to the 2-oxoacid dehydrogenase family. As to quaternary structure, forms a 24-polypeptide structural core with octahedral symmetry. Part of the 2-oxoglutarate dehydrogenase (OGDH) complex composed of E1 (2-oxoglutarate dehydrogenase), E2 (dihydrolipoamide succinyltransferase) and E3 (dihydrolipoamide dehydrogenase); the complex contains multiple copies of the three enzymatic components (E1, E2 and E3). The cofactor is (R)-lipoate.

It carries out the reaction N(6)-[(R)-dihydrolipoyl]-L-lysyl-[protein] + succinyl-CoA = N(6)-[(R)-S(8)-succinyldihydrolipoyl]-L-lysyl-[protein] + CoA. The protein operates within amino-acid degradation; L-lysine degradation via saccharopine pathway; glutaryl-CoA from L-lysine: step 6/6. In terms of biological role, E2 component of the 2-oxoglutarate dehydrogenase (OGDH) complex which catalyzes the second step in the conversion of 2-oxoglutarate to succinyl-CoA and CO(2). The polypeptide is Dihydrolipoyllysine-residue succinyltransferase component of 2-oxoglutarate dehydrogenase complex (sucB) (Pseudomonas aeruginosa (strain ATCC 15692 / DSM 22644 / CIP 104116 / JCM 14847 / LMG 12228 / 1C / PRS 101 / PAO1)).